The chain runs to 85 residues: Large ribosomal subunit protein bL27 (85 aa).

Positions 1 to 27 (MAHKKAGGSTKNGRDSQSKRLGVKRYG) are disordered.

This sequence belongs to the bacterial ribosomal protein bL27 family.

This is Large ribosomal subunit protein bL27 from Halorhodospira halophila (strain DSM 244 / SL1) (Ectothiorhodospira halophila (strain DSM 244 / SL1)).